The sequence spans 169 residues: Probable NADH dehydrogenase [ubiquinone] 1 alpha subcomplex subunit 5, mitochondrial (169 aa).

Residues 1–11 (MFLRAIGRPLL) constitute a mitochondrion transit peptide.

Belongs to the complex I NDUFA5 subunit family. In terms of assembly, complex I is composed of at least 49 different subunits.

It localises to the mitochondrion inner membrane. In terms of biological role, accessory subunit of the mitochondrial membrane respiratory chain NADH dehydrogenase (Complex I), that is believed not to be involved in catalysis. Complex I functions in the transfer of electrons from NADH to the respiratory chain. The immediate electron acceptor for the enzyme is believed to be ubiquinone. The chain is Probable NADH dehydrogenase [ubiquinone] 1 alpha subcomplex subunit 5, mitochondrial from Arabidopsis thaliana (Mouse-ear cress).